The primary structure comprises 319 residues: ATP-dependent 6-phosphofructokinase (319 aa).

Gly11 is a binding site for ATP. Position 21-25 (21-25 (RAVVR)) interacts with ADP. ATP-binding positions include 72–73 (RC) and 102–105 (GDGS). Asp103 is a Mg(2+) binding site. Substrate is bound at residue 125–127 (TID). Asp127 serves as the catalytic Proton acceptor. Arg154 contributes to the ADP binding site. Substrate is bound by residues Arg162 and 169–171 (MGR). Residues 185-187 (GAE), Arg211, and 213-215 (KKH) contribute to the ADP site. Substrate-binding positions include Glu222, Arg243, and 249-252 (HIQR).

This sequence belongs to the phosphofructokinase type A (PFKA) family. ATP-dependent PFK group I subfamily. Prokaryotic clade 'B1' sub-subfamily. Homotetramer. Requires Mg(2+) as cofactor.

It localises to the cytoplasm. The enzyme catalyses beta-D-fructose 6-phosphate + ATP = beta-D-fructose 1,6-bisphosphate + ADP + H(+). Its pathway is carbohydrate degradation; glycolysis; D-glyceraldehyde 3-phosphate and glycerone phosphate from D-glucose: step 3/4. Allosterically activated by ADP and other diphosphonucleosides, and allosterically inhibited by phosphoenolpyruvate. In terms of biological role, catalyzes the phosphorylation of D-fructose 6-phosphate to fructose 1,6-bisphosphate by ATP, the first committing step of glycolysis. The protein is ATP-dependent 6-phosphofructokinase of Shouchella clausii (strain KSM-K16) (Alkalihalobacillus clausii).